We begin with the raw amino-acid sequence, 638 residues long: Sorting nexin-41 (638 aa).

Residues 1–14 are compositionally biased toward low complexity; it reads MDSDTSPNPFASSP. The interval 1–69 is disordered; the sequence is MDSDTSPNPF…MGATVPGPKP (69 aa). Over residues 15 to 30 the composition is skewed to pro residues; the sequence is PSSPSPRPSLPPPVPR. Residues 84–201 form the PX domain; that stretch reads GEQVHIVDAL…HRFLEEDVSW (118 aa). 4 residues coordinate a 1,2-diacyl-sn-glycero-3-phospho-(1D-myo-inositol-3-phosphate): arginine 118, serine 120, lysine 144, and arginine 168. Disordered regions lie at residues 215–239, 408–432, and 545–638; these read KNPL…SEAP, LERG…RERA, and PHPN…LGPL. Positions 225 to 239 are enriched in low complexity; sequence PTFQPTTPTSPSEAP. Positions 423–432 are enriched in basic and acidic residues; that stretch reads EAARDERERA. The segment covering 552-562 has biased composition (low complexity); sequence QTQTQVQSQQS. The span at 585 to 601 shows a compositional bias: basic and acidic residues; it reads MKNEIERVEIEIADKPL.

This sequence belongs to the sorting nexin family.

It is found in the endosome membrane. The protein localises to the endomembrane system. Its function is as follows. May be required for cytoplasm to vacuole transport (Cvt) and pexophagy. In Cryptococcus neoformans var. neoformans serotype D (strain B-3501A) (Filobasidiella neoformans), this protein is Sorting nexin-41 (SNX41).